The following is a 532-amino-acid chain: Flavin-containing monooxygenase 3 (532 aa).

FAD is bound by residues 9–13 (GAGVS), Glu-32, 40–41 (LW), and 61–62 (NS). NADP(+) contacts are provided by residues 60–61 (SN) and 195–198 (SGCD). Ser-401 is subject to Phosphoserine. A helical membrane pass occupies residues 510–530 (FFFHWLKLFAIPILLIAVFLV).

The protein belongs to the FMO family. FAD serves as cofactor.

The protein resides in the microsome membrane. It localises to the endoplasmic reticulum membrane. It catalyses the reaction trimethylamine + NADPH + O2 = trimethylamine N-oxide + NADP(+) + H2O. The catalysed reaction is N,N-dimethylaniline + NADPH + O2 + H(+) = N,N-dimethylaniline N-oxide + NADP(+) + H2O. The enzyme catalyses hypotaurine + NADPH + O2 + H(+) = taurine + NADP(+) + H2O. It carries out the reaction (S)-nicotine + NADPH + O2 = trans-(S)-nicotine N(1')-oxide + NADP(+) + H2O. It catalyses the reaction albendazole + NADPH + O2 + H(+) = albendazole S-oxide + NADP(+) + H2O. Its function is as follows. Essential hepatic enzyme that catalyzes the oxygenation of a wide variety of nitrogen- and sulfur-containing compounds including drugs as well as dietary compounds. Plays an important role in the metabolism of trimethylamine (TMA), via the production of trimethylamine N-oxide (TMAO) metabolite. TMA is generated by the action of gut microbiota using dietary precursors such as choline, choline containing compounds, betaine or L-carnitine. By regulating TMAO concentration, FMO3 directly impacts both platelet responsiveness and rate of thrombus formation. This is Flavin-containing monooxygenase 3 (FMO3) from Pan troglodytes (Chimpanzee).